The primary structure comprises 179 residues: Putative manganese efflux pump MntP (179 aa).

The next 6 membrane-spanning stretches (helical) occupy residues 4-24 (VLILAFALSMDAFAVSIGLGI), 39-59 (LFFGIFQALMPFLGFLGGIGL), 69-89 (IVAFILLLAIGGKMIYEAFNE), 102-122 (ILLTLAIATSLDAMAAGYSLH), 128-148 (IYLSLFVIGFTTFIISYIGVY), and 159-179 (SKAEILGGVVLILIGLKILLF).

The protein belongs to the MntP (TC 9.B.29) family.

The protein resides in the cell inner membrane. Functionally, probably functions as a manganese efflux pump. In Aliarcobacter butzleri (strain RM4018) (Arcobacter butzleri), this protein is Putative manganese efflux pump MntP.